The sequence spans 227 residues: Flagellar L-ring protein 2 (227 aa).

Residues 1–17 (MKSKLAITMVSALLLAA) form the signal peptide. C18 carries N-palmitoyl cysteine lipidation. The S-diacylglycerol cysteine moiety is linked to residue C18.

It belongs to the FlgH family. As to quaternary structure, the basal body constitutes a major portion of the flagellar organelle and consists of four rings (L,P,S, and M) mounted on a central rod.

The protein localises to the cell outer membrane. It localises to the bacterial flagellum basal body. Functionally, assembles around the rod to form the L-ring and probably protects the motor/basal body from shearing forces during rotation. The sequence is that of Flagellar L-ring protein 2 from Chromobacterium violaceum (strain ATCC 12472 / DSM 30191 / JCM 1249 / CCUG 213 / NBRC 12614 / NCIMB 9131 / NCTC 9757 / MK).